Consider the following 110-residue polypeptide: Waprin-Thr1 (110 aa).

The signal sequence occupies residues 1–20 (MYKKGTILVLAYLLIATAVC). A WAP domain is found at 22 to 68 (LSYKEGHCPLRNSVSKCIPRCVSDYQCSFNEKCCPNKCGSESCVQAS). 4 cysteine pairs are disulfide-bonded: C29-C55, C38-C59, C42-C54, and C48-C64.

This sequence belongs to the venom waprin family. Cys-rich waprin subfamily. In terms of tissue distribution, expressed by the venom gland.

The protein localises to the secreted. In terms of biological role, antimicrobial peptides with activity against Gram-positive and Gram-negative bacteria as well as fungi. Recognizes carbohydrates in the microbial cell walls, and induces structural damage to them. Also inhibits microbial serine proteases subtilisin A and proteinase K, as well as human and porcine elastases. Carbohydrates that are recognized are LPS, mannan, peptidoglycan, and N-acetl-D-glucosamine. This is Waprin-Thr1 from Apis mellifera (Honeybee).